We begin with the raw amino-acid sequence, 380 residues long: Cytochrome b (380 aa).

4 consecutive transmembrane segments (helical) span residues 34–54 (FGSLLAMCLATQILTGLLLAM), 78–99 (WLIRNLHANGASFFFICIFLHI), 114–134 (WNTGVILLLTLMATAFVGYVL), and 179–199 (FFALHFLLPFVIAGITIIHLI). Residues histidine 84 and histidine 98 each contribute to the heme b site. 2 residues coordinate heme b: histidine 183 and histidine 197. Histidine 202 is an a ubiquinone binding site. 4 helical membrane-spanning segments follow: residues 227–247 (LKDILGLTLMLTPLLTLALFS), 289–309 (LGGVLALAASVLILLLIPFLH), 321–341 (LSQTLFWLLVANLLVLTWVGS), and 348–368 (FIIIGQMASFSYFTILLILFP).

Belongs to the cytochrome b family. As to quaternary structure, the cytochrome bc1 complex contains 11 subunits: 3 respiratory subunits (MT-CYB, CYC1 and UQCRFS1), 2 core proteins (UQCRC1 and UQCRC2) and 6 low-molecular weight proteins (UQCRH/QCR6, UQCRB/QCR7, UQCRQ/QCR8, UQCR10/QCR9, UQCR11/QCR10 and a cleavage product of UQCRFS1). This cytochrome bc1 complex then forms a dimer. The cofactor is heme b.

It localises to the mitochondrion inner membrane. In terms of biological role, component of the ubiquinol-cytochrome c reductase complex (complex III or cytochrome b-c1 complex) that is part of the mitochondrial respiratory chain. The b-c1 complex mediates electron transfer from ubiquinol to cytochrome c. Contributes to the generation of a proton gradient across the mitochondrial membrane that is then used for ATP synthesis. This is Cytochrome b (MT-CYB) from Tragopan temminckii (Temminck's tragopan).